We begin with the raw amino-acid sequence, 289 residues long: Carbonyl reductase [NADPH] 1 (289 aa).

The residue at position 2 (Ser2) is an N-acetylserine. Ser2 is subject to Phosphoserine. Residues 10-34 (VTGANKGIGFAIVRDLCRQFAGDVV), 63-64 (DI), and Asn90 each bind NADP(+). Glutathione contacts are provided by residues 95–97 (FQL) and Gln106. Residue Ser140 participates in substrate binding. Glutathione is bound at residue 193 to 194 (TY). Tyr194 (proton acceptor) is an active-site residue. NADP(+)-binding positions include 194 to 198 (YGVTK) and 231 to 233 (VRT). The residue at position 239 (Lys239) is an N6-1-carboxyethyl lysine.

Belongs to the short-chain dehydrogenases/reductases (SDR) family. As to quaternary structure, monomer. In terms of tissue distribution, expressed in kidney (at protein level).

It localises to the cytoplasm. It carries out the reaction a secondary alcohol + NADP(+) = a ketone + NADPH + H(+). The enzyme catalyses prostaglandin E1 + NADP(+) = 15-oxoprostaglandin E1 + NADPH + H(+). The catalysed reaction is prostaglandin F2alpha + NADP(+) = prostaglandin E2 + NADPH + H(+). It catalyses the reaction prostaglandin D2 + NADP(+) = 15-oxoprostaglandin D2 + NADPH + H(+). It carries out the reaction prostaglandin E2 + NADP(+) = 15-oxoprostaglandin E2 + NADPH + H(+). The enzyme catalyses prostaglandin F2alpha + NADP(+) = 15-oxoprostaglandin F2alpha + NADPH + H(+). The catalysed reaction is menadione + NADPH + H(+) = menadiol + NADP(+). It catalyses the reaction daunorubicin + NADPH + H(+) = 13-dihydrodaunorubicin + NADP(+). It carries out the reaction S-nitrosoglutathione + NADPH + H(+) = S-(hydroxysulfenamide)glutathione + NADP(+). The enzyme catalyses a primary alcohol + NADP(+) = an aldehyde + NADPH + H(+). The catalysed reaction is cortisol + NADPH + H(+) = 20beta-dihydrocortisol + NADP(+). It catalyses the reaction corticosterone + NADPH + H(+) = 20beta-dihydrocorticosterone + NADP(+). NADPH-dependent reductase with broad substrate specificity. Catalyzes the reduction of a wide variety of carbonyl compounds including quinones, prostaglandins, menadione, plus various xenobiotics. Catalyzes the reduction of the antitumor anthracyclines doxorubicin and daunorubicin to the cardiotoxic compounds doxorubicinol and daunorubicinol. Can convert prostaglandin E2 to prostaglandin F2-alpha. Can bind glutathione, which explains its higher affinity for glutathione-conjugated substrates. Catalyzes the reduction of S-nitrosoglutathione. In addition, participates in the glucocorticoid metabolism by catalyzing the NADPH-dependent cortisol/corticosterone into 20beta-dihydrocortisol (20b-DHF) or 20beta-corticosterone (20b-DHB), which are weak agonists of NR3C1 and NR3C2 in adipose tissue. The chain is Carbonyl reductase [NADPH] 1 from Sus scrofa (Pig).